The chain runs to 647 residues: Threonine--tRNA ligase (647 aa).

Positions 1 to 60 (MQVTIEDQSLEAAAGEACGQVLSRAVSGKRLKNAVACLVDGQPRDLAFPLPEDAHELALV) constitute a TGS domain. Residues 242 to 533 (DHRKLGAQLD…LIEHTAGALP (292 aa)) form a catalytic region. Zn(2+) is bound by residues Cys-334, His-385, and His-510.

This sequence belongs to the class-II aminoacyl-tRNA synthetase family. As to quaternary structure, homodimer. It depends on Zn(2+) as a cofactor.

The protein localises to the cytoplasm. The enzyme catalyses tRNA(Thr) + L-threonine + ATP = L-threonyl-tRNA(Thr) + AMP + diphosphate + H(+). Catalyzes the attachment of threonine to tRNA(Thr) in a two-step reaction: L-threonine is first activated by ATP to form Thr-AMP and then transferred to the acceptor end of tRNA(Thr). Also edits incorrectly charged L-seryl-tRNA(Thr). This Solidesulfovibrio magneticus (strain ATCC 700980 / DSM 13731 / RS-1) (Desulfovibrio magneticus) protein is Threonine--tRNA ligase.